We begin with the raw amino-acid sequence, 506 residues long: Maturase K (506 aa).

The protein belongs to the intron maturase 2 family. MatK subfamily.

The protein resides in the plastid. Its subcellular location is the chloroplast. In terms of biological role, usually encoded in the trnK tRNA gene intron. Probably assists in splicing its own and other chloroplast group II introns. The sequence is that of Maturase K from Arctostaphylos uva-ursi (Bearberry).